The sequence spans 500 residues: Cytochrome P450 CYP736A12 (500 aa).

A helical membrane pass occupies residues L4–I24. Position 442 (C442) interacts with heme.

This sequence belongs to the cytochrome P450 family. Heme is required as a cofactor.

The protein localises to the membrane. Functionally, probable heme-thiolate monooxygenase. The sequence is that of Cytochrome P450 CYP736A12 from Panax ginseng (Korean ginseng).